The sequence spans 150 residues: MQIILLEKVANLGNLGEVVKVKDGYARNFLIPSGAARRATETAVKEFEAKRIELEKAAAAKLAASQAEGEKLNGKTISITQKAGVDGRLFGSVTNHDIAEALGKAGFKVVKSQVRLPNGPLKTVGEHPVTVALHTDVVVDVNVTVVGETD.

It belongs to the bacterial ribosomal protein bL9 family.

Functionally, binds to the 23S rRNA. The protein is Large ribosomal subunit protein bL9 of Methylibium petroleiphilum (strain ATCC BAA-1232 / LMG 22953 / PM1).